The chain runs to 760 residues: Rho GTPase-activating protein 26 (760 aa).

The region spanning 7–262 (EFSECCLDSP…MKENPHEHKN (256 aa)) is the BAR domain. The region spanning 265 to 369 (PYTMEGYLYV…WMEAMDGREP (105 aa)) is the PH domain. The Rho-GAP domain maps to 383-568 (AQLDSIGFSI…ILIENHEKIF (186 aa)). Disordered stretches follow at residues 571–617 (VPET…ESRN) and 658–701 (PNRP…SPIS). Over residues 605–617 (HTAQPNEKQESRN) the composition is skewed to polar residues. The span at 674-701 (LSPSWPMFSAPSSPMPTSSTSSDSSPIS) shows a compositional bias: low complexity. The SH3 domain occupies 702–760 (SPLRKARALYACKAEHDSELSFTAGTVFDNVHPSQEPGWLEGTLNGKTGLIPENYVEFL).

Binds to the C-terminus of PTK2/FAK1. Detected in embryonic brain and liver, and at low levels in embryonic eye, heart, lung, intestine and skeletal muscle.

It is found in the cell junction. It localises to the focal adhesion. The protein resides in the cytoplasm. Its subcellular location is the cytoskeleton. The protein localises to the endosome membrane. Functionally, GTPase-activating protein for RHOA and CDC42. May be involved in the regulation of neosynthesized protein export through a Rab-endososomal dependent export route. The chain is Rho GTPase-activating protein 26 (ARHGAP26) from Gallus gallus (Chicken).